Consider the following 659-residue polypeptide: Delta(6)-protoilludene synthase (659 aa).

The Mg(2+) site is built by aspartate 91, asparagine 227, serine 231, and glutamate 235. The short motif at 91-95 is the DDXXD motif element; sequence DEHTD. 2 residues coordinate (2E,6E)-farnesyl diphosphate: arginine 316 and tyrosine 317. Positions 528–586 are disordered; the sequence is PQFSKTSGAPNGAHTPTTTNGSIKSNGFVSGDTNGHANGNGHVQTRSSTPSSSSSSTSS. Polar residues predominate over residues 530–573; that stretch reads FSKTSGAPNGAHTPTTTNGSIKSNGFVSGDTNGHANGNGHVQTR. Positions 574–586 are enriched in low complexity; the sequence is SSTPSSSSSSTSS.

This sequence belongs to the terpene synthase family. It depends on Mg(2+) as a cofactor.

It carries out the reaction (2E,6E)-farnesyl diphosphate = Delta(6)-protoilludene + diphosphate. In terms of biological role, terpene cyclase that catalyzes the cyclization of farnesyl diphosphate (FPP) to delta(6)-protoilludene. The chain is Delta(6)-protoilludene synthase from Cyclocybe aegerita (Black poplar mushroom).